A 932-amino-acid polypeptide reads, in one-letter code: Protein translocase subunit SecA (932 aa).

Residues Q87, 105–109, and D515 each bind ATP; that span reads GEGKT. C916, C918, C927, and H928 together coordinate Zn(2+).

Belongs to the SecA family. Monomer and homodimer. Part of the essential Sec protein translocation apparatus which comprises SecA, SecYEG and auxiliary proteins SecDF-YajC and YidC. Zn(2+) is required as a cofactor.

It localises to the cell inner membrane. The protein localises to the cytoplasm. It catalyses the reaction ATP + H2O + cellular proteinSide 1 = ADP + phosphate + cellular proteinSide 2.. Part of the Sec protein translocase complex. Interacts with the SecYEG preprotein conducting channel. Has a central role in coupling the hydrolysis of ATP to the transfer of proteins into and across the cell membrane, serving both as a receptor for the preprotein-SecB complex and as an ATP-driven molecular motor driving the stepwise translocation of polypeptide chains across the membrane. This is Protein translocase subunit SecA from Burkholderia lata (strain ATCC 17760 / DSM 23089 / LMG 22485 / NCIMB 9086 / R18194 / 383).